The sequence spans 215 residues: Calcium-binding protein 7 (215 aa).

Residues 1–188 (MPFHPVTAAL…QIRQTCVRKS (188 aa)) lie on the Cytoplasmic side of the membrane. EF-hand domains lie at 33 to 68 (DELEEIREAFKVFDRDGNGFISKQELGTAMRSLGYM) and 69 to 104 (PNEVELEVIIQRLDMDGDGQVDFEEFVTLLGPKLST). Ca(2+) contacts are provided by Asp-46, Asp-48, Asn-50, Glu-57, Asp-82, Asp-84, Asp-86, Gln-88, and Glu-93. The chain crosses the membrane as a helical; Anchor for type IV membrane protein span at residues 189-209 (LICAFAIAFIISVMLIAANQV). The Extracellular segment spans residues 210–215 (LRSGMK).

As to quaternary structure, interacts with PI4KB. This binding competes with FREQ/NCS1 binding in a calcium-dependent manner.

It localises to the golgi apparatus. Its subcellular location is the trans-Golgi network membrane. The protein localises to the cytoplasm. It is found in the perinuclear region. The protein resides in the cell membrane. In terms of biological role, negatively regulates Golgi-to-plasma membrane trafficking by interacting with PI4KB and inhibiting its activity. The sequence is that of Calcium-binding protein 7 (CABP7) from Homo sapiens (Human).